Consider the following 130-residue polypeptide: Small ribosomal subunit protein uS11 (130 aa).

The protein belongs to the universal ribosomal protein uS11 family. As to quaternary structure, part of the 30S ribosomal subunit. Interacts with proteins S7 and S18. Binds to IF-3.

Functionally, located on the platform of the 30S subunit, it bridges several disparate RNA helices of the 16S rRNA. Forms part of the Shine-Dalgarno cleft in the 70S ribosome. The chain is Small ribosomal subunit protein uS11 from Borreliella afzelii (strain PKo) (Borrelia afzelii).